We begin with the raw amino-acid sequence, 253 residues long: 5'-nucleotidase SurE (253 aa).

The a divalent metal cation site is built by aspartate 8, aspartate 9, serine 39, and asparagine 92.

This sequence belongs to the SurE nucleotidase family. Requires a divalent metal cation as cofactor.

It localises to the cytoplasm. It carries out the reaction a ribonucleoside 5'-phosphate + H2O = a ribonucleoside + phosphate. Nucleotidase that shows phosphatase activity on nucleoside 5'-monophosphates. This Burkholderia pseudomallei (strain 1710b) protein is 5'-nucleotidase SurE.